A 255-amino-acid chain; its full sequence is Ribonuclease HII (255 aa).

In terms of domain architecture, RNase H type-2 spans 72–255 (AIICGIDEVG…KSFEPIKSLL (184 aa)). Residues D78, E79, and D170 each contribute to the a divalent metal cation site.

This sequence belongs to the RNase HII family. Mn(2+) serves as cofactor. It depends on Mg(2+) as a cofactor.

Its subcellular location is the cytoplasm. The enzyme catalyses Endonucleolytic cleavage to 5'-phosphomonoester.. Its function is as follows. Endonuclease that specifically degrades the RNA of RNA-DNA hybrids. This chain is Ribonuclease HII, found in Staphylococcus aureus (strain USA300).